We begin with the raw amino-acid sequence, 253 residues long: Oxidoreductase AOL_s00215g277 (253 aa).

Residues 181 to 203 (FFGYWLTVILGYYIGSLLGYQPF) traverse the membrane as a helical segment.

It belongs to the oxidoreductase OpS7 family.

It localises to the membrane. It functions in the pathway secondary metabolite biosynthesis; terpenoid biosynthesis. Oxidoreductase; part of the gene cluster that mediates the biosynthesis of sesquiterpenyl epoxy-cyclohexenoids (SECs) such as anthrobotrisins and arthrosporols, metabolites that possess a novel hybrid carbon skeleton consisting of a polyketide-derived epoxycyclohexenol combined with a terpenoid-derived monocyclic sesquiterpenol substructure (PKS-PTS hybrid). The SEC pathway plays an important role for fungal soil colonization via decreasing fungal nematode-capturing ability. Within the pathway, the oxidoreductase AOL_s00215g277 seems to play a role in the farnesylation step of toluquinol to produce farnesyl hydroquinone, the hybrid precursor for biosynthesis of SECs. The pathway begins with the biosynthesis of 6-methylsalicylic acid (6-MSA), the first precursor of the polyketide-derived epoxycyclohexenol in arthrosporols, by the polyketide synthase (PKS) AOL_s00215g283 via condensation of 1 acetate and 3 malonate units. The 6-methylsalicylic acid decarboxylase AOL_s00215g281 then catalyzes the decarboxylation of 6-methylsalicylic acid to yield m-cresol. The cytochrome P450 monooxygenase AOL_s00215g282 further oxidizes m-cresol to yield toluquinol. With the assistance of the oxidoreductase AOL_s00215g277, the polyprenyl transferase AOL_s00215g276 catalyzes the farnesylation of toluquinol to produce farnesyl hydroquinone, the hybrid precursor for biosynthesis of SECs. Farnesyl hydroquinone undergoes epoxidation and then subsequent dehydrogenation to form farnesyl epoxy-quinone, the first and simplest SEC. The cytochrome P450 monooxygenase AOL_s00215g278 and the FAD-dependent monooxygenase AOL_s00215g279 might be involved in the oxygenation of the phenol moiety, most likely in the epoxy formation. The cytochrome P450 monooxygenases AOL_s00215g274 and AOL_s00215g280 are involved in specific regional ketone reductions at respectively C-4 and C-1 of farnesyl epoxy-quinone PubMed:33823587. In Arthrobotrys oligospora (strain ATCC 24927 / CBS 115.81 / DSM 1491) (Nematode-trapping fungus), this protein is Oxidoreductase AOL_s00215g277.